The following is a 151-amino-acid chain: Minor curlin subunit (151 aa).

The signal sequence occupies residues 1 to 21 (MKNKLLFMMLTILGAPGIATA).

The protein belongs to the CsgA/CsgB family.

The protein localises to the fimbrium. Functionally, curlin is the structural subunit of the curli. Curli are coiled surface structures that assemble preferentially at growth temperatures below 37 degrees Celsius. Curli can bind to fibronectin. The minor subunit is the nucleation component of curlin monomers. The chain is Minor curlin subunit (csgB) from Salmonella enteritidis.